We begin with the raw amino-acid sequence, 502 residues long: tRNA-2-methylthio-N(6)-dimethylallyladenosine synthase (502 aa).

An MTTase N-terminal domain is found at Arg-12–His-129. 6 residues coordinate [4Fe-4S] cluster: Cys-21, Cys-58, Cys-92, Cys-166, Cys-170, and Cys-173. Residues Arg-152–Glu-383 form the Radical SAM core domain. The TRAM domain maps to Arg-385–Pro-455. A disordered region spans residues Ala-451–Cys-502.

The protein belongs to the methylthiotransferase family. MiaB subfamily. Monomer. The cofactor is [4Fe-4S] cluster.

The protein localises to the cytoplasm. The enzyme catalyses N(6)-dimethylallyladenosine(37) in tRNA + (sulfur carrier)-SH + AH2 + 2 S-adenosyl-L-methionine = 2-methylsulfanyl-N(6)-dimethylallyladenosine(37) in tRNA + (sulfur carrier)-H + 5'-deoxyadenosine + L-methionine + A + S-adenosyl-L-homocysteine + 2 H(+). Functionally, catalyzes the methylthiolation of N6-(dimethylallyl)adenosine (i(6)A), leading to the formation of 2-methylthio-N6-(dimethylallyl)adenosine (ms(2)i(6)A) at position 37 in tRNAs that read codons beginning with uridine. This is tRNA-2-methylthio-N(6)-dimethylallyladenosine synthase from Salinispora arenicola (strain CNS-205).